The sequence spans 238 residues: Probable transcriptional regulatory protein SpyM51586 (238 aa).

This sequence belongs to the TACO1 family. YeeN subfamily.

It localises to the cytoplasm. This chain is Probable transcriptional regulatory protein SpyM51586, found in Streptococcus pyogenes serotype M5 (strain Manfredo).